Here is a 274-residue protein sequence, read N- to C-terminus: Indole-3-glycerol phosphate synthase (274 aa).

It belongs to the TrpC family.

The enzyme catalyses 1-(2-carboxyphenylamino)-1-deoxy-D-ribulose 5-phosphate + H(+) = (1S,2R)-1-C-(indol-3-yl)glycerol 3-phosphate + CO2 + H2O. Its pathway is amino-acid biosynthesis; L-tryptophan biosynthesis; L-tryptophan from chorismate: step 4/5. The protein is Indole-3-glycerol phosphate synthase of Kineococcus radiotolerans (strain ATCC BAA-149 / DSM 14245 / SRS30216).